Consider the following 209-residue polypeptide: PF03932 family protein CutC (209 aa).

This sequence belongs to the CutC family.

It localises to the cytoplasm. Might participate in the control of copper homeostasis; data from other bacteria suggests it is not involved. This is PF03932 family protein CutC from Enterococcus faecalis (strain ATCC 700802 / V583).